Consider the following 128-residue polypeptide: L-ectoine synthase (128 aa).

Belongs to the ectoine synthase family.

It carries out the reaction (2S)-4-acetamido-2-aminobutanoate = L-ectoine + H2O. It functions in the pathway amine and polyamine biosynthesis; ectoine biosynthesis; L-ectoine from L-aspartate 4-semialdehyde: step 3/3. In terms of biological role, catalyzes the circularization of gamma-N-acetyl-alpha,gamma-diaminobutyric acid (ADABA) to ectoine (1,4,5,6-tetrahydro-2-methyl-4-pyrimidine carboxylic acid), which is an excellent osmoprotectant. The protein is L-ectoine synthase of Vibrio atlanticus (strain LGP32) (Vibrio splendidus (strain Mel32)).